Consider the following 178-residue polypeptide: Nicotinamide-nucleotide adenylyltransferase (178 aa).

The protein belongs to the archaeal NMN adenylyltransferase family. In terms of assembly, homohexamer.

The protein resides in the cytoplasm. The enzyme catalyses beta-nicotinamide D-ribonucleotide + ATP + H(+) = diphosphate + NAD(+). Its pathway is cofactor biosynthesis; NAD(+) biosynthesis; NAD(+) from nicotinamide D-ribonucleotide: step 1/1. The chain is Nicotinamide-nucleotide adenylyltransferase from Methanothermobacter thermautotrophicus (strain ATCC 29096 / DSM 1053 / JCM 10044 / NBRC 100330 / Delta H) (Methanobacterium thermoautotrophicum).